The sequence spans 828 residues: Transcription factor SOX-6 (828 aa).

The tract at residues 1-51 (MSSKQATSPFACAADGEDAMTQDLTSREKEEGSDQHVASHLPLHPIMHNKP) is disordered. The segment covering 25 to 34 (TSREKEEGSD) has biased composition (basic and acidic residues). Thr-119 bears the Phosphothreonine mark. A coiled-coil region spans residues 184–262 (LAEKERQLST…LLQQQIQVQG (79 aa)). Residues 380–470 (SPGAKMPSTP…KSSIPSPIGG (91 aa)) are disordered. Residues 393–402 (NTAGTVSPTG) show a composition bias toward polar residues. Residue Ser-399 is modified to Phosphoserine. Thr-401 is subject to Phosphothreonine. Residues Lys-404 and Lys-417 each participate in a glycyl lysine isopeptide (Lys-Gly) (interchain with G-Cter in SUMO) cross-link. 2 positions are modified to phosphoserine: Ser-439 and Ser-442. Positions 439 to 461 (SPTSPTQNLFPASKTSPVNLPNK) are enriched in polar residues. Residues 621 to 689 (IKRPMNAFMV…IHLEKYPNYK (69 aa)) constitute a DNA-binding region (HMG box). Residues 753 to 781 (TPSPQMTSDCSSTSASPEPSLPVIQSTYG) show a composition bias toward polar residues. The interval 753–828 (TPSPQMTSDC…NEAPEAVSAN (76 aa)) is disordered. The span at 796 to 809 (NGEDEMEMYDDYED) shows a compositional bias: acidic residues.

As to quaternary structure, homodimer. Interacts with DAZAP2. May interact with CENPK. In terms of processing, sumoylation inhibits the transcriptional activity. In terms of tissue distribution, expressed in a wide variety of tissues, most abundantly in skeletal musclen.

The protein localises to the nucleus. The protein resides in the cytoplasm. Transcription factor that plays a key role in several developmental processes, including neurogenesis, chondrocytes differentiation and cartilage formation. Specifically binds the 5'-AACAAT-3' DNA motif present in enhancers and super-enhancers and promotes expression of genes important for chondrogenesis. Required for overt chondrogenesis when condensed prechondrocytes differentiate into early stage chondrocytes: SOX5 and SOX6 cooperatively bind with SOX9 on active enhancers and super-enhancers associated with cartilage-specific genes, and thereby potentiate SOX9's ability to transactivate. Not involved in precartilaginous condensation, the first step in chondrogenesis, during which skeletal progenitors differentiate into prechondrocytes. Together with SOX5, required to form and maintain a pool of highly proliferating chondroblasts between epiphyses and metaphyses, to form columnar chondroblasts, delay chondrocyte prehypertrophy but promote hypertrophy, and to delay terminal differentiation of chondrocytes on contact with ossification fronts. Binds to the proximal promoter region of the myelin protein MPZ gene, and is thereby involved in the differentiation of oligodendroglia in the developing spinal tube. Binds to the gene promoter of MBP and acts as a transcriptional repressor. The polypeptide is Transcription factor SOX-6 (Homo sapiens (Human)).